Here is a 167-residue protein sequence, read N- to C-terminus: Probable chorismate pyruvate-lyase (167 aa).

Substrate contacts are provided by R71, I110, and E150.

This sequence belongs to the UbiC family.

Its subcellular location is the cytoplasm. The enzyme catalyses chorismate = 4-hydroxybenzoate + pyruvate. Its pathway is cofactor biosynthesis; ubiquinone biosynthesis. In terms of biological role, removes the pyruvyl group from chorismate, with concomitant aromatization of the ring, to provide 4-hydroxybenzoate (4HB) for the ubiquinone pathway. The chain is Probable chorismate pyruvate-lyase from Acinetobacter baylyi (strain ATCC 33305 / BD413 / ADP1).